A 78-amino-acid chain; its full sequence is Large ribosomal subunit protein bL28 (78 aa).

This sequence belongs to the bacterial ribosomal protein bL28 family.

This Thioalkalivibrio sulfidiphilus (strain HL-EbGR7) protein is Large ribosomal subunit protein bL28.